A 505-amino-acid chain; its full sequence is Cytochrome P450 CYP71D313 (505 aa).

The helical transmembrane segment at methionine 1–phenylalanine 21 threads the bilayer. Position 441 (cysteine 441) interacts with heme. Residues proline 442–phenylalanine 462 form a helical membrane-spanning segment.

The protein belongs to the cytochrome P450 family. Heme serves as cofactor.

The protein localises to the membrane. In terms of biological role, probable heme-thiolate monooxygenase. This chain is Cytochrome P450 CYP71D313, found in Panax ginseng (Korean ginseng).